Consider the following 444-residue polypeptide: Methylenetetrahydrofolate--tRNA-(uracil-5-)-methyltransferase TrmFO (444 aa).

10–15 serves as a coordination point for FAD; that stretch reads GAGLAG.

The protein belongs to the MnmG family. TrmFO subfamily. The cofactor is FAD.

The protein resides in the cytoplasm. The catalysed reaction is uridine(54) in tRNA + (6R)-5,10-methylene-5,6,7,8-tetrahydrofolate + NADH + H(+) = 5-methyluridine(54) in tRNA + (6S)-5,6,7,8-tetrahydrofolate + NAD(+). It catalyses the reaction uridine(54) in tRNA + (6R)-5,10-methylene-5,6,7,8-tetrahydrofolate + NADPH + H(+) = 5-methyluridine(54) in tRNA + (6S)-5,6,7,8-tetrahydrofolate + NADP(+). Catalyzes the folate-dependent formation of 5-methyl-uridine at position 54 (M-5-U54) in all tRNAs. This Streptococcus pneumoniae serotype 4 (strain ATCC BAA-334 / TIGR4) protein is Methylenetetrahydrofolate--tRNA-(uracil-5-)-methyltransferase TrmFO.